A 129-amino-acid polypeptide reads, in one-letter code: Large ribosomal subunit protein uL22 (129 aa).

The protein belongs to the universal ribosomal protein uL22 family. Part of the 50S ribosomal subunit.

Its function is as follows. This protein binds specifically to 23S rRNA; its binding is stimulated by other ribosomal proteins, e.g. L4, L17, and L20. It is important during the early stages of 50S assembly. It makes multiple contacts with different domains of the 23S rRNA in the assembled 50S subunit and ribosome. The globular domain of the protein is located near the polypeptide exit tunnel on the outside of the subunit, while an extended beta-hairpin is found that lines the wall of the exit tunnel in the center of the 70S ribosome. The sequence is that of Large ribosomal subunit protein uL22 from Aster yellows witches'-broom phytoplasma (strain AYWB).